Reading from the N-terminus, the 266-residue chain is GTP cyclohydrolase III (266 aa).

The protein belongs to the archaeal-type GTP cyclohydrolase family.

The enzyme catalyses GTP + 3 H2O = 2-amino-5-formylamino-6-(5-phospho-D-ribosylamino)pyrimidin-4(3H)-one + 2 phosphate + 2 H(+). Its function is as follows. Catalyzes the formation of 2-amino-5-formylamino-6-ribofuranosylamino-4(3H)-pyrimidinone ribonucleotide monophosphate and inorganic phosphate from GTP. Also has an independent pyrophosphate phosphohydrolase activity. In Methanococcus maripaludis (strain DSM 14266 / JCM 13030 / NBRC 101832 / S2 / LL), this protein is GTP cyclohydrolase III.